A 303-amino-acid polypeptide reads, in one-letter code: MGDVDKWIEDVKKCKYLPENELKKLCEMVCDILLEETNILPVSTPVTVCGDIHGQFYDLEQLFRTGGQVPHTNYIFMGDFVDRGYYSLETFTRLLTLKARYPSRITLLRGNHETRQITKVYGFFDECFSKYGNANGWKYCCKVFDLLTIAAIIDEEVLCVHGGLSPEIITLDQIRTIDRNGEIPYKGAFCDLVWSDPEDMEYWGQSPRGAGWLFGHNVTKDFMAINNLNLICRAHQLVNEGIKYMFDGKLVTVWSAPNYCYRCGNVAAILSFETAEKRQTKIFLAVPDAERVIPKQNTTPYFL.

Mn(2+) is bound by residues Asp-51, His-53, Asp-79, and Asn-111. Catalysis depends on His-112, which acts as the Proton donor. The Mn(2+) site is built by His-161 and His-235.

This sequence belongs to the PPP phosphatase family. PP-6 (PP-V) subfamily. Mn(2+) is required as a cofactor.

The protein localises to the cytoplasm. The enzyme catalyses O-phospho-L-seryl-[protein] + H2O = L-seryl-[protein] + phosphate. It catalyses the reaction O-phospho-L-threonyl-[protein] + H2O = L-threonyl-[protein] + phosphate. In terms of biological role, may be involved in controlling cellularization or in regulating transcription of the genes involved in this process. This is Serine/threonine-protein phosphatase 6 catalytic subunit (PpV) from Drosophila melanogaster (Fruit fly).